A 249-amino-acid chain; its full sequence is tRNA pseudouridine synthase A (249 aa).

The Nucleophile role is filled by D53. Residue Y111 participates in substrate binding.

Belongs to the tRNA pseudouridine synthase TruA family. In terms of assembly, homodimer.

It carries out the reaction uridine(38/39/40) in tRNA = pseudouridine(38/39/40) in tRNA. Functionally, formation of pseudouridine at positions 38, 39 and 40 in the anticodon stem and loop of transfer RNAs. This chain is tRNA pseudouridine synthase A, found in Streptococcus pyogenes serotype M3 (strain ATCC BAA-595 / MGAS315).